Here is a 153-residue protein sequence, read N- to C-terminus: Prostaglandin E synthase (153 aa).

Over 1–13 (MPPPSLAMVSGQA) the chain is Lumenal. The chain crosses the membrane as a helical span at residues 14–42 (LPAFLLCSTLLVIKMYAVAVITGQVRLRK). Residue arginine 39 participates in glutathione binding. The Cytoplasmic portion of the chain corresponds to 43-61 (KAFANPEDALRHGGLQFHR). The chain crosses the membrane as a helical span at residues 62 to 91 (DDQDVERCLRAHRNDMETIYPFLFLGLVYS). 74–78 (RNDME) is a glutathione binding site. Topologically, residues 92–96 (FLGPD) are lumenal. Residues 97–120 (PFVAQMHFLVFFLGRMVHTVAYLG) traverse the membrane as a helical segment. Histidine 114 and tyrosine 118 together coordinate glutathione. The Cytoplasmic portion of the chain corresponds to 121 to 124 (KLRA). A helical membrane pass occupies residues 125–153 (PTRSLAYTVAQLPCASMALQIVWEAARHL). 127 to 131 (RSLAY) lines the glutathione pocket.

The protein belongs to the MAPEG family. In terms of assembly, homotrimer. Glutathione serves as cofactor.

It is found in the membrane. The protein resides in the cytoplasm. Its subcellular location is the perinuclear region. The enzyme catalyses prostaglandin H2 = prostaglandin E2. The catalysed reaction is 2-glyceryl-prostaglandin H2 = 2-glyceryl-prostaglandin E2. It catalyses the reaction prostaglandin G2 = (15S)-15-hydroperoxy-prostaglandin E2. It carries out the reaction 1-chloro-2,4-dinitrobenzene + glutathione = 2,4-dinitrophenyl-S-glutathione + chloride + H(+). The enzyme catalyses (5S)-hydroperoxy-(6E,8Z,11Z,14Z)-eicosatetraenoate + 2 glutathione = (5S)-hydroxy-(6E,8Z,11Z,14Z)-eicosatetraenoate + glutathione disulfide + H2O. It participates in lipid metabolism; prostaglandin biosynthesis. Functionally, terminal enzyme of the cyclooxygenase (COX)-2-mediated prostaglandin E2 (PGE2) biosynthetic pathway. Catalyzes the glutathione-dependent oxidoreduction of prostaglandin endoperoxide H2 (PGH2) to prostaglandin E2 (PGE2) in response to inflammatory stimuli. Plays a key role in inflammation response, fever and pain. Also catalyzes the oxidoreduction of endocannabinoids into prostaglandin glycerol esters and PGG2 into 15-hydroperoxy-PGE2. In addition, displays low glutathione transferase and glutathione-dependent peroxidase activities, toward 1-chloro-2,4-dinitrobenzene and 5-hydroperoxyicosatetraenoic acid (5-HPETE), respectively. This Equus caballus (Horse) protein is Prostaglandin E synthase (PTGES).